Here is a 945-residue protein sequence, read N- to C-terminus: Isoleucine--tRNA ligase 1 (945 aa).

The 'HIGH' region signature appears at 66 to 76 (PYANGDIHLGH). E581 contacts L-isoleucyl-5'-AMP. Residues 622 to 626 (KMSKS) carry the 'KMSKS' region motif. K625 contributes to the ATP binding site. Residues C908, C911, C928, and C931 each contribute to the Zn(2+) site.

It belongs to the class-I aminoacyl-tRNA synthetase family. IleS type 1 subfamily. As to quaternary structure, monomer. Zn(2+) is required as a cofactor.

It is found in the cytoplasm. It catalyses the reaction tRNA(Ile) + L-isoleucine + ATP = L-isoleucyl-tRNA(Ile) + AMP + diphosphate. In terms of biological role, catalyzes the attachment of isoleucine to tRNA(Ile). As IleRS can inadvertently accommodate and process structurally similar amino acids such as valine, to avoid such errors it has two additional distinct tRNA(Ile)-dependent editing activities. One activity is designated as 'pretransfer' editing and involves the hydrolysis of activated Val-AMP. The other activity is designated 'posttransfer' editing and involves deacylation of mischarged Val-tRNA(Ile). The chain is Isoleucine--tRNA ligase 1 from Burkholderia pseudomallei (strain K96243).